Consider the following 300-residue polypeptide: Probable acetyltransferase Rv3034c (300 aa).

The first 25 residues, 1–25, serve as a signal peptide directing secretion; it reads MNVLSLGSSSGVVWGRVPITAPAGA.

It belongs to the transferase hexapeptide repeat family.

In terms of biological role, may be involved in the biosynthesis of 6-O-methylglucosyl-containing lipopolysaccharides (MGLP). Its function is as follows. Regulates host peroxisome homeostasis in response to intracellular redox levels to favor mycobacterial infection in macrophage. Induces the expression of host peroxisome biogenesis and proliferation factors as well as peroxisome associated enzymes. Inhibits the induction of host pexophagy mechanism by down-regulating the expression of pexophagy associated proteins and adapter molecules in infected macrophages. However, during increased oxidative stress conditions, it induces degradation of dysfunctional and damaged peroxisomes. Regulation of peroxisome biogenesis and degradation is dependent upon host p-mTORC1 mediated signaling pathway. The polypeptide is Probable acetyltransferase Rv3034c (Mycobacterium tuberculosis (strain ATCC 25618 / H37Rv)).